Here is an 818-residue protein sequence, read N- to C-terminus: SIT4-associating protein SAP4 (818 aa).

Disordered stretches follow at residues 33–60 (ETSS…RDRS) and 499–526 (TSNT…KNIK). The segment covering 509-518 (NNDSNDSNDN) has biased composition (low complexity).

Belongs to the SAPS family. Post-translationally, hyperphosphorylated in the absence of SIT4.

Functionally, associates with the SIT4 phosphatase in a cell cycle dependent manner. May be directly or indirectly involved in SIT4-dependent functions in budding and in normal G1 cyclin expression. The polypeptide is SIT4-associating protein SAP4 (SAP4) (Saccharomyces cerevisiae (strain ATCC 204508 / S288c) (Baker's yeast)).